The sequence spans 412 residues: Subtilisin-like protease 6 (412 aa).

A signal peptide spans 1–20 (MGFITKAIPIVLAALSTVNG). A propeptide spanning residues 21–126 (ARILEAGPHA…VVRTTTNGTN (106 aa)) is cleaved from the precursor. Residues 36 to 120 (KYIVVMKREV…FIEPDFVVRT (85 aa)) enclose the Inhibitor I9 domain. N-linked (GlcNAc...) asparagine glycans are attached at residues asparagine 123 and asparagine 126. The Peptidase S8 domain maps to 135–412 (SWGLARVGSK…GKLIYNGSGK (278 aa)). Residues aspartate 167 and histidine 198 each act as charge relay system in the active site. Asparagine 252 and asparagine 264 each carry an N-linked (GlcNAc...) asparagine glycan. The Charge relay system role is filled by serine 358. N-linked (GlcNAc...) asparagine glycosylation occurs at asparagine 408.

The protein belongs to the peptidase S8 family.

The protein resides in the secreted. Functionally, secreted subtilisin-like serine protease with keratinolytic activity that contributes to pathogenicity. This is Subtilisin-like protease 6 (SUB6) from Trichophyton rubrum (Athlete's foot fungus).